A 248-amino-acid chain; its full sequence is Adenosylcobinamide-GDP ribazoletransferase (248 aa).

Transmembrane regions (helical) follow at residues 34–54, 58–78, 113–133, 139–159, 185–205, and 227–247; these read LVFA…LFYI, FFPP…LTGG, AVLA…SIPL, ALLL…GSTV, IIYF…LAAA, and DILG…FYLF.

This sequence belongs to the CobS family. It depends on Mg(2+) as a cofactor.

It is found in the cell membrane. It catalyses the reaction alpha-ribazole + adenosylcob(III)inamide-GDP = adenosylcob(III)alamin + GMP + H(+). The catalysed reaction is alpha-ribazole 5'-phosphate + adenosylcob(III)inamide-GDP = adenosylcob(III)alamin 5'-phosphate + GMP + H(+). It participates in cofactor biosynthesis; adenosylcobalamin biosynthesis; adenosylcobalamin from cob(II)yrinate a,c-diamide: step 7/7. In terms of biological role, joins adenosylcobinamide-GDP and alpha-ribazole to generate adenosylcobalamin (Ado-cobalamin). Also synthesizes adenosylcobalamin 5'-phosphate from adenosylcobinamide-GDP and alpha-ribazole 5'-phosphate. This is Adenosylcobinamide-GDP ribazoletransferase from Acetivibrio thermocellus (strain ATCC 27405 / DSM 1237 / JCM 9322 / NBRC 103400 / NCIMB 10682 / NRRL B-4536 / VPI 7372) (Clostridium thermocellum).